Consider the following 248-residue polypeptide: MSVTMREMLEAGVHFGHQTRFWNPKMAPFIFGHRNRIHIVNLEKTMGMYQEAMKYIRQLSSNRGTVLFVGTKRQARETIAAEAQRAGMPYVDQRWLGGMLTNFKTIKTSIKRLKEMEASIEDGSVQKLSKKEALMFEREKIKLEKSIGGIKDMGGIPDAIFVVDVGYHKGAITEAAKLGIPVIGVVDTNHSPEGVTYVIPGNDDSSKAIMLYARGVADAILEGRANATNDLVESIKGGDDFVEVSEQA.

This sequence belongs to the universal ribosomal protein uS2 family.

The chain is Small ribosomal subunit protein uS2 from Janthinobacterium sp. (strain Marseille) (Minibacterium massiliensis).